The primary structure comprises 304 residues: GTPase Era (304 aa).

One can recognise an Era-type G domain in the interval 11 to 186; sequence YCGFIAIVGR…LRKGVHHFPE (176 aa). The segment at 19–26 is G1; that stretch reads GRPNVGKS. 19–26 is a GTP binding site; that stretch reads GRPNVGKS. Residues 45-49 form a G2 region; sequence QTTRH. Residues 66–69 form a G3 region; that stretch reads DTPG. Residues 66 to 70 and 128 to 131 contribute to the GTP site; these read DTPGL and NKVD. The tract at residues 128–131 is G4; that stretch reads NKVD. The tract at residues 158–160 is G5; the sequence is ISA. In terms of domain architecture, KH type-2 spans 210–287; that stretch reads TGEELPYSVT…HLELWVKVKS (78 aa).

This sequence belongs to the TRAFAC class TrmE-Era-EngA-EngB-Septin-like GTPase superfamily. Era GTPase family. In terms of assembly, monomer.

Its subcellular location is the cytoplasm. It localises to the cell inner membrane. Its function is as follows. An essential GTPase that binds both GDP and GTP, with rapid nucleotide exchange. Plays a role in 16S rRNA processing and 30S ribosomal subunit biogenesis and possibly also in cell cycle regulation and energy metabolism. The sequence is that of GTPase Era from Histophilus somni (strain 2336) (Haemophilus somnus).